Consider the following 461-residue polypeptide: Phenolic glucoside malonyltransferase 1 (461 aa).

The active-site Proton acceptor is the His-167. An HXXXD motif motif is present at residues 167–171 (HAAQD). Residue 281–282 (ST) coordinates malonyl-CoA. Asp-400 functions as the Proton acceptor in the catalytic mechanism. A DFGWG motif motif is present at residues 400–404 (DFGWG).

Belongs to the plant acyltransferase family. Phenolic glucoside malonyltransferase subfamily. In terms of tissue distribution, expressed in all tissues. Most highly expressed in the abdomen and especially in the gut.

The enzyme catalyses a flavonol 3-O-beta-D-glucoside + malonyl-CoA = a flavonol 3-O-(6-O-malonyl-beta-D-glucoside) + CoA. It carries out the reaction kaempferol 3-O-beta-D-glucoside + malonyl-CoA = kaempferol 3-O-(6-O-malonyl-beta-D-glucoside) + CoA. The catalysed reaction is quercetin 3-O-beta-D-glucoside + malonyl-CoA = quercetin 3-O-(6-O-malonyl-beta-D-glucoside) + CoA. It catalyses the reaction a flavonol 7-O-beta-D-glucoside + malonyl-CoA = a flavonol 7-O-(6-O-malonyl-beta-D-glucoside) + CoA. The enzyme catalyses (2S)-naringenin 7-O-beta-D-glucoside + malonyl-CoA = (2S)-naringenin 7-O-(6-O-malonyl-beta-D-glucoside) + CoA. It carries out the reaction kaempferol 7-O-beta-D-glucoside + malonyl-CoA = kaempferol 7-O-(6-O-malonyl-beta-D-glucoside) + CoA. The catalysed reaction is apigenin 7-O-beta-D-glucoside + malonyl-CoA = apigenin 7-O-(6-O-malonyl-beta-D-glucoside) + CoA. It catalyses the reaction rhaponticin + malonyl-CoA = 6-O-malonyl-rhaponticin + CoA. Phenolic glucoside malonyltransferase that neutralizes phenolic glycosides in host plants. Catalyzes the transfer of a malonyl group from malonyl-CoA to the phenolic glycosides, leading to their detoxification. Phenolic glycosides, which are among the most abundant plant secondary metabolites, act as plant defense compounds: they strongly affect growth, development and behavior of insect herbivores. Has malonyltransferase activity against flavonoids kaempferol 3-O-glucoside, kaempferol 7-O-glucoside, isoquercetin (quercetin 3-O-beta-D-glucopyranoside), apigetrin (apigenin 7-O-beta-D-glucoside) and prunin (naringenin 7-O-beta-D-glucoside). Also has activity toward non-flavonoid rhaponticin, but with lower efficiency. The protein is Phenolic glucoside malonyltransferase 1 of Bemisia tabaci (Sweetpotato whitefly).